The primary structure comprises 282 residues: Small ribosomal subunit protein uS3 (282 aa).

Residues 43–111 (IRQLMSTGME…QVQLNILEVK (69 aa)) enclose the KH type-2 domain. The tract at residues 218-282 (QQAASAPSRG…AAVATEGSDA (65 aa)) is disordered. Positions 230–262 (PRRDGDDRGPRRENSGPRRDGGNLRSQRNDRNE) are enriched in basic and acidic residues. Residues 263–276 (NAAVEAAPAAAAVA) show a composition bias toward low complexity.

Belongs to the universal ribosomal protein uS3 family. As to quaternary structure, part of the 30S ribosomal subunit. Forms a tight complex with proteins S10 and S14.

Binds the lower part of the 30S subunit head. Binds mRNA in the 70S ribosome, positioning it for translation. The sequence is that of Small ribosomal subunit protein uS3 from Renibacterium salmoninarum (strain ATCC 33209 / DSM 20767 / JCM 11484 / NBRC 15589 / NCIMB 2235).